The following is a 771-amino-acid chain: MAHITSWHYGNAIALLVSLAPGALSLNTFPDCSSGPLSKLAVCDTSLDVTTRAQSLVNAMTFEEKVNNTQYNSPGVPRLGLPAYNWWSEALHGVAGSPGVEFADSGPFSYATSFPQPILLGATFDDDLIKQVATVVSTEGRAFGNAGRSGLDFWTPNINPFRDARWGRGQETPGEDPLHVSRYVYHLVDGLQNGIGPANPKVVATCKHFAAYDLEDWNGVVRHSFNAEVSTQDLSEFYLPPFKSCARDARVDAVMCSYNALNGVPACADSYLLQTILREHWKWDEPGRWITSDCGAIDDIYNGHNFTTTPAEAAATALNAGTDLDCGTVFPKYLGQAADEGLYSNQTLDRALVRLYSSLVKLGYFDPAEDQPYRSIGWTDVDTPAAEALAHKAAGEGIVLLKNDKTLPLKAKGTLALIGPYANATKQMQGNYEGPAKYIRTLLWAATQAGYDVKYAAGTAINTNSTAGFDAALSAAKQADVVVYAGGIDNTIEAEGRDRTTIAWPGNQVNLIDQLSKIGKPLVVVQFGGGQVDDSSLLSNPRVNALLWAGYPSQEGGSAIFDILTGKTAPAGRLPVTQYPADYVNQVPMTDMALRPGSNTPGRTYRWYDKAVLPFGFGLHYTTFKISWPRRALGPYNTAALVSRSPKNVPIDRAAFDTFHIQVTNTGKTTSDYVALLFLKTTDAGPKPYPLKTLVGYTRAKQIKPGEKRSVDIEVSLGSLARTAENGDLVLYPGRYTLEVDVGESQYPTASFTVTGKETILDSFPQPPKTR.

An N-terminal signal peptide occupies residues 1 to 25; it reads MAHITSWHYGNAIALLVSLAPGALS. The N-linked (GlcNAc...) asparagine glycan is linked to asparagine 67. Residue aspartate 293 is part of the active site. Residues asparagine 305, asparagine 345, asparagine 423, and asparagine 464 are each glycosylated (N-linked (GlcNAc...) asparagine).

This sequence belongs to the glycosyl hydrolase 3 family.

The protein localises to the secreted. The catalysed reaction is Hydrolysis of (1-&gt;4)-beta-D-xylans, to remove successive D-xylose residues from the non-reducing termini.. The protein operates within glycan degradation; xylan degradation. In terms of biological role, xylan 1,4-beta-xylosidase involved in the hydrolysis of xylan, a major structural heterogeneous polysaccharide found in plant biomass representing the second most abundant polysaccharide in the biosphere, after cellulose. The protein is Probable exo-1,4-beta-xylosidase bxlB (bxlB) of Aspergillus fumigatus (strain CBS 144.89 / FGSC A1163 / CEA10) (Neosartorya fumigata).